A 464-amino-acid polypeptide reads, in one-letter code: tRNA modification GTPase MnmE (464 aa).

Residues R28, E90, and R129 each coordinate (6S)-5-formyl-5,6,7,8-tetrahydrofolate. The 160-residue stretch at 226–385 folds into the TrmE-type G domain; sequence GLATAIVGRP…LEEKIAELFF (160 aa). Position 236 (N236) interacts with K(+). Residues 236–241, 255–261, and 280–283 each bind GTP; these read NVGKSS, TDIAGTT, and DTAG. Position 240 (S240) interacts with Mg(2+). K(+)-binding residues include T255, I257, and T260. T261 is a binding site for Mg(2+). K464 is a (6S)-5-formyl-5,6,7,8-tetrahydrofolate binding site.

It belongs to the TRAFAC class TrmE-Era-EngA-EngB-Septin-like GTPase superfamily. TrmE GTPase family. Homodimer. Heterotetramer of two MnmE and two MnmG subunits. The cofactor is K(+).

It is found in the cytoplasm. Functionally, exhibits a very high intrinsic GTPase hydrolysis rate. Involved in the addition of a carboxymethylaminomethyl (cmnm) group at the wobble position (U34) of certain tRNAs, forming tRNA-cmnm(5)s(2)U34. This chain is tRNA modification GTPase MnmE, found in Ligilactobacillus salivarius (strain UCC118) (Lactobacillus salivarius).